A 59-amino-acid chain; its full sequence is MSEQRYNRYEKARILGARALQVSYGAPVLIDTDQTEPILVAAEEYDAGALPFTVRRESN.

Belongs to the archaeal Rpo6/eukaryotic RPB6 RNA polymerase subunit family. As to quaternary structure, part of the RNA polymerase complex.

Its subcellular location is the cytoplasm. The enzyme catalyses RNA(n) + a ribonucleoside 5'-triphosphate = RNA(n+1) + diphosphate. Functionally, DNA-dependent RNA polymerase (RNAP) catalyzes the transcription of DNA into RNA using the four ribonucleoside triphosphates as substrates. The chain is DNA-directed RNA polymerase subunit Rpo6 from Halorubrum lacusprofundi (strain ATCC 49239 / DSM 5036 / JCM 8891 / ACAM 34).